Reading from the N-terminus, the 532-residue chain is Intercellular adhesion molecule 1 (532 aa).

An N-terminal signal peptide occupies residues Met1–Ala27. Residues Gln28–Glu480 lie on the Extracellular side of the membrane. Ig-like C2-type domains follow at residues Gly41–Ala103 and Gly128–Arg193. Residue Asn47 is glycosylated (N-linked (GlcNAc...) asparagine). 2 disulfide bridges follow: Cys48–Cys92 and Cys52–Cys96. 2 N-linked (GlcNAc...) asparagine glycosylation sites follow: Asn130 and Asn145. Cysteines 135 and 186 form a disulfide. Positions Arg152–Glu154 match the Cell attachment site; atypical motif. Residues Asn183, Asn202, Asn267, Asn296, and Asn316 are each glycosylated (N-linked (GlcNAc...) asparagine). The Ig-like C2-type 3 domain maps to Asp230–Gln297. A disulfide bridge connects residues Cys237 and Cys290. Residues Gly325–Ala378 form the Ig-like C2-type 4 domain. A disulfide bridge connects residues Cys332 and Cys371. N-linked (GlcNAc...) asparagine glycosylation is found at Asn385 and Asn406. 3 disulfides stabilise this stretch: Cys403-Cys419, Cys419-Cys457, and Cys431-Cys457. An Ig-like C2-type 5 domain is found at Asn412–Gly464. Residues Val481–Tyr503 form a helical membrane-spanning segment. At Asn504 to Pro532 the chain is on the cytoplasmic side. The interval Arg513 to Pro532 is disordered. Over residues Gln515–Pro532 the composition is skewed to polar residues. Phosphothreonine occurs at positions 521 and 530.

Belongs to the immunoglobulin superfamily. ICAM family. As to quaternary structure, homodimer. Interacts with MUC1 and promotes cell aggregation in epithelial cells. Interacts with ARHGEF26/SGEF. Interacts (on T cell side) with CD81, CD247 and CD9 at immunological synapses between antigen-presenting cells and T cells. In terms of processing, monoubiquitinated, which is promoted by MARCH9 and leads to endocytosis.

It is found in the membrane. Functionally, ICAM proteins are ligands for the leukocyte adhesion protein LFA-1 (integrin alpha-L/beta-2). During leukocyte trans-endothelial migration, ICAM1 engagement promotes the assembly of endothelial apical cups through ARHGEF26/SGEF and RHOG activation. In Macaca mulatta (Rhesus macaque), this protein is Intercellular adhesion molecule 1 (ICAM1).